Reading from the N-terminus, the 387-residue chain is Paralemmin-1 (387 aa).

The residue at position 1 (M1) is an N-acetylmethionine. Residues 9–101 are a coiled coil; sequence TSQQERLQAI…EKEIEVLERG (93 aa). Composition is skewed to basic and acidic residues over residues 31-41 and 69-102; these read KRRQLEDERRQ and DLRRQMQDDEQKTRLLEDSVSRLEKEIEVLERGD. Residues 31–160 are disordered; that stretch reads KRRQLEDERR…VSNTPLRTVD (130 aa). The span at 104–117 shows a compositional bias: low complexity; it reads APATAKENAAAPSP. A phosphoserine mark is found at S116 and S124. Phosphothreonine occurs at positions 141 and 145. S162 is modified (phosphoserine). T243 is modified (phosphothreonine). S245 bears the Phosphoserine mark. Disordered stretches follow at residues 247 to 296 and 335 to 378; these read AGST…GQEP and AEPK…DMKK. The span at 286–296 shows a compositional bias: low complexity; sequence GPPGIQPGQEP. S346 carries the post-translational modification Phosphoserine. At T367 the chain carries Phosphothreonine. S369 is modified (phosphoserine). Residues C381 and C383 are each lipidated (S-palmitoyl cysteine). C384 bears the Cysteine methyl ester mark. C384 carries the S-farnesyl cysteine lipid modification. Positions 385–387 are cleaved as a propeptide — removed in mature form; that stretch reads SIM.

The protein belongs to the paralemmin family. As to quaternary structure, interacts with dopamine receptor DRD3. As to expression, widely expressed with highest expression in brain and testis and intermediate expression in heart and adrenal gland.

The protein localises to the cell membrane. It localises to the cell projection. Its subcellular location is the filopodium membrane. It is found in the axon. The protein resides in the dendrite. The protein localises to the dendritic spine. It localises to the basolateral cell membrane. Its subcellular location is the apicolateral cell membrane. Functionally, involved in plasma membrane dynamics and cell process formation. Isoform 1 and isoform 2 are necessary for axonal and dendritic filopodia induction, for dendritic spine maturation and synapse formation in a palmitoylation-dependent manner. The chain is Paralemmin-1 (PALM) from Homo sapiens (Human).